The primary structure comprises 139 residues: MGRTIRFGVSLDSELLDKFDVLCDERCYQTRSEAIRDLIRNTLVQQEWEDTDREIAGTLTLVYDHHKSDLAQRLTEIQHDVHDIIITSLHVHLDHYNCLEVLVLKGPGQQVRNLAQRLISTKGVKHGKLSLTTTGQDLT.

Residues H79, H90, H92, and C98 each contribute to the Ni(2+) site.

The protein belongs to the transcriptional regulatory CopG/NikR family. The cofactor is Ni(2+).

Its function is as follows. Transcriptional regulator. This chain is Putative nickel-responsive regulator, found in Nitratidesulfovibrio vulgaris (strain ATCC 29579 / DSM 644 / CCUG 34227 / NCIMB 8303 / VKM B-1760 / Hildenborough) (Desulfovibrio vulgaris).